Reading from the N-terminus, the 109-residue chain is Elicitor peptide 2 (109 aa).

Residues 1–73 (MEKLDKRREE…KDDDVVVLLR (73 aa)) constitute a propeptide that is removed on maturation. The segment covering 74–88 (DNKAKSKKRDKEKPS) has biased composition (basic and acidic residues). The interval 74 to 109 (DNKAKSKKRDKEKPSSGRPGQTNSVPNAAIQVYKED) is disordered.

The protein belongs to the brassicaceae elicitor peptide family.

Elicitor of plant defense. The sequence is that of Elicitor peptide 2 (PEP2) from Arabidopsis thaliana (Mouse-ear cress).